The primary structure comprises 140 residues: HTH-type transcriptional regulator YfmP (140 aa).

One can recognise an HTH merR-type domain in the interval 1–73; it reads MEWMKIDQVA…LQELQHFMET (73 aa). A DNA-binding region (H-T-H motif) is located at residues 6–25; sequence IDQVAKRSGLTKRTIRFYEE.

Repressor of the yfmOP operon. A mutation in yfmP leads to overexpression of yfmO, probably causing a decrease in cellular copper that is eventually responsible for a reduced copper induction of copZA. The polypeptide is HTH-type transcriptional regulator YfmP (yfmP) (Bacillus subtilis (strain 168)).